A 512-amino-acid polypeptide reads, in one-letter code: Maturase K (512 aa).

This sequence belongs to the intron maturase 2 family. MatK subfamily.

Its subcellular location is the plastid. The protein localises to the chloroplast. Functionally, usually encoded in the trnK tRNA gene intron. Probably assists in splicing its own and other chloroplast group II introns. The polypeptide is Maturase K (Oenothera glazioviana (Large-flowered evening primrose)).